Reading from the N-terminus, the 460-residue chain is Alpha-amylase (460 aa).

The signal sequence occupies residues 1-21 (MASRTLSGALALAAAATAVLA). Ca(2+) contacts are provided by asparagine 121, glutamine 167, and aspartate 176. The active-site Nucleophile is aspartate 206. Position 210 (histidine 210) interacts with Ca(2+). The Proton donor role is filled by glutamate 233.

Belongs to the glycosyl hydrolase 13 family. In terms of assembly, monomer. Ca(2+) serves as cofactor.

The catalysed reaction is Endohydrolysis of (1-&gt;4)-alpha-D-glucosidic linkages in polysaccharides containing three or more (1-&gt;4)-alpha-linked D-glucose units.. The protein is Alpha-amylase (amy) of Streptomyces thermoviolaceus.